We begin with the raw amino-acid sequence, 160 residues long: SsrA-binding protein (160 aa).

Positions 133-160 (GKKLHDKRDTEKERDWKREQQRLLRDRG) are disordered. Residues 138-160 (DKRDTEKERDWKREQQRLLRDRG) show a composition bias toward basic and acidic residues.

This sequence belongs to the SmpB family.

It localises to the cytoplasm. In terms of biological role, required for rescue of stalled ribosomes mediated by trans-translation. Binds to transfer-messenger RNA (tmRNA), required for stable association of tmRNA with ribosomes. tmRNA and SmpB together mimic tRNA shape, replacing the anticodon stem-loop with SmpB. tmRNA is encoded by the ssrA gene; the 2 termini fold to resemble tRNA(Ala) and it encodes a 'tag peptide', a short internal open reading frame. During trans-translation Ala-aminoacylated tmRNA acts like a tRNA, entering the A-site of stalled ribosomes, displacing the stalled mRNA. The ribosome then switches to translate the ORF on the tmRNA; the nascent peptide is terminated with the 'tag peptide' encoded by the tmRNA and targeted for degradation. The ribosome is freed to recommence translation, which seems to be the essential function of trans-translation. The chain is SsrA-binding protein from Rhizorhabdus wittichii (strain DSM 6014 / CCUG 31198 / JCM 15750 / NBRC 105917 / EY 4224 / RW1) (Sphingomonas wittichii).